The sequence spans 342 residues: Isopentenyl-diphosphate delta-isomerase (342 aa).

A substrate-binding site is contributed by 12 to 13; sequence RK. Residues 71–73, serine 101, and asparagine 129 contribute to the FMN site; that span reads AMT. 101-103 provides a ligand contact to substrate; it reads SQR. Glutamine 163 is a binding site for substrate. Glutamate 164 is a Mg(2+) binding site. FMN-binding positions include lysine 195, threonine 225, 272 to 274, and 293 to 294; these read GIR and AR.

The protein belongs to the IPP isomerase type 2 family. In terms of assembly, homooctamer. Dimer of tetramers. It depends on FMN as a cofactor. The cofactor is NADPH. Mg(2+) is required as a cofactor.

Its subcellular location is the cytoplasm. The enzyme catalyses isopentenyl diphosphate = dimethylallyl diphosphate. Involved in the biosynthesis of isoprenoids. Catalyzes the 1,3-allylic rearrangement of the homoallylic substrate isopentenyl (IPP) to its allylic isomer, dimethylallyl diphosphate (DMAPP). This is Isopentenyl-diphosphate delta-isomerase from Mycolicibacterium gilvum (strain PYR-GCK) (Mycobacterium gilvum (strain PYR-GCK)).